The primary structure comprises 170 residues: NADH-quinone oxidoreductase subunit B (170 aa).

[4Fe-4S] cluster contacts are provided by C37, C38, C102, and C131.

The protein belongs to the complex I 20 kDa subunit family. In terms of assembly, NDH-1 is composed of 14 different subunits. Subunits NuoB, C, D, E, F, and G constitute the peripheral sector of the complex. The cofactor is [4Fe-4S] cluster.

It localises to the cell inner membrane. The enzyme catalyses a quinone + NADH + 5 H(+)(in) = a quinol + NAD(+) + 4 H(+)(out). Its function is as follows. NDH-1 shuttles electrons from NADH, via FMN and iron-sulfur (Fe-S) centers, to quinones in the respiratory chain. The immediate electron acceptor for the enzyme in this species is believed to be ubiquinone. Couples the redox reaction to proton translocation (for every two electrons transferred, four hydrogen ions are translocated across the cytoplasmic membrane), and thus conserves the redox energy in a proton gradient. In Geobacter sp. (strain M21), this protein is NADH-quinone oxidoreductase subunit B.